A 451-amino-acid polypeptide reads, in one-letter code: UPF0210 protein NMB1652 (451 aa).

Belongs to the UPF0210 family. As to quaternary structure, homodimer.

The protein is UPF0210 protein NMB1652 of Neisseria meningitidis serogroup B (strain ATCC BAA-335 / MC58).